Here is a 224-residue protein sequence, read N- to C-terminus: uncharacterized protein (224 aa).

The protein to M.tuberculosis Rv2558.

This is an uncharacterized protein from Mycobacterium tuberculosis (strain CDC 1551 / Oshkosh).